The primary structure comprises 142 residues: Relaxin-3 (142 aa).

The N-terminal stretch at 1-25 (MARYKLLLLLAVWVLTGELWPGAEA) is a signal peptide. 3 disulfide bridges follow: Cys35–Cys129, Cys47–Cys142, and Cys128–Cys133. A propeptide spans 55–118 (SDILAHEAMG…GTPGALRGSR (64 aa)) (connecting peptide).

It belongs to the insulin family. As to quaternary structure, heterodimer of a B chain and an A chain linked by two disulfide bonds.

Its subcellular location is the secreted. In terms of biological role, may play a role in neuropeptide signaling processes. Ligand for LGR7, RXFP3 and RXFP4. The polypeptide is Relaxin-3 (RLN3) (Pan troglodytes (Chimpanzee)).